The primary structure comprises 90 residues: Small ribosomal subunit protein bS20 (90 aa).

The interval 1–27 (MANSAQAKKRARQNEKRELHNASQRSA) is disordered.

The protein belongs to the bacterial ribosomal protein bS20 family.

Binds directly to 16S ribosomal RNA. The protein is Small ribosomal subunit protein bS20 of Coxiella burnetii (strain CbuK_Q154) (Coxiella burnetii (strain Q154)).